The sequence spans 299 residues: Oxygen-dependent coproporphyrinogen-III oxidase (299 aa).

A substrate-binding site is contributed by S92. H96 and H106 together coordinate a divalent metal cation. The active-site Proton donor is H106. Residue 108–110 (NVR) coordinates substrate. A divalent metal cation-binding residues include H145 and H175. The important for dimerization stretch occupies residues 240–275 (YVEFNLVWDRGTLFGLQTGGRTESILMSMPPLVRWE). 258 to 260 (GGR) provides a ligand contact to substrate.

The protein belongs to the aerobic coproporphyrinogen-III oxidase family. As to quaternary structure, homodimer. It depends on a divalent metal cation as a cofactor.

The protein resides in the cytoplasm. It carries out the reaction coproporphyrinogen III + O2 + 2 H(+) = protoporphyrinogen IX + 2 CO2 + 2 H2O. The protein operates within porphyrin-containing compound metabolism; protoporphyrin-IX biosynthesis; protoporphyrinogen-IX from coproporphyrinogen-III (O2 route): step 1/1. Functionally, involved in the heme biosynthesis. Catalyzes the aerobic oxidative decarboxylation of propionate groups of rings A and B of coproporphyrinogen-III to yield the vinyl groups in protoporphyrinogen-IX. The protein is Oxygen-dependent coproporphyrinogen-III oxidase of Salmonella paratyphi B (strain ATCC BAA-1250 / SPB7).